An 88-amino-acid chain; its full sequence is Carboxysome shell vertex protein CsoS4A (88 aa).

Positions 1 to 76 constitute a BMV domain; that stretch reads MLICKVLKPL…SDLTIVGIID (76 aa).

Belongs to the CcmL/EutN family. CsoS4 subfamily. Homopentamer.

It is found in the carboxysome. Its function is as follows. Probably forms vertices in the carboxysome, a polyhedral inclusion where RuBisCO (ribulose bisphosphate carboxylase, cbbL-cbbS) is sequestered. Has been modeled to induce curvature upon insertion into an otherwise flat hexagonal layer of major carboxysome subunits. Has not been identified in purified carboxysomes; it is expected to be present in very low amounts. The protein is Carboxysome shell vertex protein CsoS4A of Prochlorococcus marinus subsp. pastoris (strain CCMP1986 / NIES-2087 / MED4).